The chain runs to 500 residues: Protein DETOXIFICATION 29 (500 aa).

12 helical membrane-spanning segments follow: residues 67–87 (GAIT…AVSV), 91–111 (VVAG…ETLC), 132–152 (VILN…APIL), 161–181 (ISSA…AYAI), 197–217 (VMAV…WFVI), 227–247 (LAVV…VYIF), 277–297 (AVML…AGYL), 302–322 (ISVA…MIAI), 349–369 (LVAV…LLIF), 393–413 (ILAL…VAVG), 419–439 (VVAY…GLLL), and 449–469 (GIWC…TWMI).

This sequence belongs to the multi antimicrobial extrusion (MATE) (TC 2.A.66.1) family.

Its subcellular location is the vacuole membrane. This is Protein DETOXIFICATION 29 from Arabidopsis thaliana (Mouse-ear cress).